The following is a 177-amino-acid chain: Large ribosomal subunit protein uL6 (177 aa).

This sequence belongs to the universal ribosomal protein uL6 family. Part of the 50S ribosomal subunit.

Its function is as follows. This protein binds to the 23S rRNA, and is important in its secondary structure. It is located near the subunit interface in the base of the L7/L12 stalk, and near the tRNA binding site of the peptidyltransferase center. In Neisseria gonorrhoeae (strain ATCC 700825 / FA 1090), this protein is Large ribosomal subunit protein uL6.